The chain runs to 864 residues: Probable M1 family aminopeptidase 2 (864 aa).

Residues glutamate 149 and 289 to 293 (GAMEN) contribute to the substrate site. Zn(2+) is bound at residue histidine 325. The Proton acceptor role is filled by glutamate 326. Positions 329 and 348 each coordinate Zn(2+).

It belongs to the peptidase M1 family. It depends on Zn(2+) as a cofactor.

This Encephalitozoon cuniculi (strain GB-M1) (Microsporidian parasite) protein is Probable M1 family aminopeptidase 2.